The following is a 399-amino-acid chain: Elongation factor Tu (399 aa).

The tr-type G domain occupies 10-204; that stretch reads KPHVNIGTIG…AVDTSIPEPE (195 aa). A G1 region spans residues 19-26; sequence GHVDHGKT. 19–26 provides a ligand contact to GTP; it reads GHVDHGKT. Position 26 (T26) interacts with Mg(2+). The segment at 60–64 is G2; the sequence is GITIN. The tract at residues 81–84 is G3; it reads DCPG. GTP-binding positions include 81–85 and 136–139; these read DCPGH and NKCD. The tract at residues 136-139 is G4; it reads NKCD. A G5 region spans residues 174 to 176; that stretch reads SGL.

This sequence belongs to the TRAFAC class translation factor GTPase superfamily. Classic translation factor GTPase family. EF-Tu/EF-1A subfamily. Monomer.

The protein localises to the cytoplasm. The catalysed reaction is GTP + H2O = GDP + phosphate + H(+). Functionally, GTP hydrolase that promotes the GTP-dependent binding of aminoacyl-tRNA to the A-site of ribosomes during protein biosynthesis. This Prochlorococcus marinus (strain MIT 9303) protein is Elongation factor Tu.